The following is a 493-amino-acid chain: Tripartite motif-containing protein 5 (493 aa).

A2 bears the N-acetylalanine mark. The RING-type zinc finger occupies 15-59 (CPICLELLTQPLSLDCGHSFCQACLTANHKKSMLDKGESSCPVCR). The residue at position 86 (S86) is a Phosphoserine. The segment at 90-132 (QKVDHCAHHGEKLLLFCQEDGKVICWLCERSQEHRGHHTFLTE) adopts a B box-type zinc-finger fold. Zn(2+) contacts are provided by C95, H98, C117, and H123. Residues 131-240 (TEEVAREYQV…LISDLERRLQ (110 aa)) are a coiled coil. Residues 185 to 198 (FEQLRDILDWEESN) are required for interaction with GABARAP and for autophagy. Residues 281–493 (LKGMLEVFRE…VPMTLCSPSS (213 aa)) form the B30.2/SPRY domain.

Belongs to the TRIM/RBCC family. Can form homodimers and homotrimers. In addition to lower-order dimerization, also exhibits a higher-order multimerization and both low- and high-order multimerizations are essential for its restriction activity. Interacts with BTBD1 and BTBD2. Interacts with PSMC4, PSMC5, PSMD7 and HSPA8/HSC70. Interacts (via B30.2/SPRY domain) with HSPA1A/B. Interacts with PSMC2, MAP3K7/TAK1, TAB2 and TAB3. Interacts with SQSTM1. Interacts with TRIM6 and TRIM34. Interacts with ULK1 (phosphorylated form), GABARAP, GABARAPL1, GABARAPL2, MAP1LC3A, MAP1LC3C and BECN1. Degraded in a proteasome-independent fashion in the absence of viral infection but in a proteasome-dependent fashion following exposure to restriction sensitive virus. In terms of processing, autoubiquitinated in a RING finger- and UBE2D2-dependent manner. Monoubiquitinated by TRIM21. Deubiquitinated by Yersinia YopJ. Ubiquitination may not lead to proteasomal degradation.

The protein localises to the cytoplasm. Its subcellular location is the nucleus. The catalysed reaction is S-ubiquitinyl-[E2 ubiquitin-conjugating enzyme]-L-cysteine + [acceptor protein]-L-lysine = [E2 ubiquitin-conjugating enzyme]-L-cysteine + N(6)-ubiquitinyl-[acceptor protein]-L-lysine.. The protein operates within protein modification; protein ubiquitination. Capsid-specific restriction factor that prevents infection from non-host-adapted retroviruses. Blocks viral replication early in the life cycle, after viral entry but before reverse transcription. In addition to acting as a capsid-specific restriction factor, also acts as a pattern recognition receptor that activates innate immune signaling in response to the retroviral capsid lattice. Binding to the viral capsid triggers its E3 ubiquitin ligase activity, and in concert with the heterodimeric ubiquitin conjugating enzyme complex UBE2V1-UBE2N (also known as UBC13-UEV1A complex) generates 'Lys-63'-linked polyubiquitin chains, which in turn are catalysts in the autophosphorylation of the MAP3K7/TAK1 complex (includes TAK1, TAB2, and TAB3). Activation of the MAP3K7/TAK1 complex by autophosphorylation results in the induction and expression of NF-kappa-B and MAPK-responsive inflammatory genes, thereby leading to an innate immune response in the infected cell. Plays a role in regulating autophagy through activation of autophagy regulator BECN1 by causing its dissociation from its inhibitors BCL2 and TAB2. The polypeptide is Tripartite motif-containing protein 5 (TRIM5) (Pan troglodytes (Chimpanzee)).